The primary structure comprises 325 residues: Eukaryotic translation initiation factor 3 subunit I (325 aa).

5 WD repeats span residues 1-39, 43-81, 87-127, 135-175, and 180-217; these read MKPI…VWYS, ERLG…LWDC, LALL…FFDL, NNEP…QYSA, and VLVN…LFDS. Thr-219 is modified (phosphothreonine). WD repeat units lie at residues 221–267 and 275–316; these read EHQK…KFEA and EEEF…YFDP. At Lys-264 the chain carries N6-acetyllysine. A Glycyl lysine isopeptide (Lys-Gly) (interchain with G-Cter in ubiquitin) cross-link involves residue Lys-282. Tyr-308 carries the post-translational modification Phosphotyrosine.

Component of the eukaryotic translation initiation factor 3 (eIF-3) complex, which is composed of 13 subunits: EIF3A, EIF3B, EIF3C, EIF3D, EIF3E, EIF3F, EIF3G, EIF3H, EIF3I, EIF3J, EIF3K, EIF3L and EIF3M. The eIF-3 complex appears to include 3 stable modules: module A is composed of EIF3A, EIF3B, EIF3G and EIF3I; module B is composed of EIF3F, EIF3H, and EIF3M; and module C is composed of EIF3C, EIF3D, EIF3E, EIF3K and EIF3L. EIF3C of module C binds EIF3B of module A and EIF3H of module B, thereby linking the three modules. EIF3J is a labile subunit that binds to the eIF-3 complex via EIF3B. The eIF-3 complex interacts with RPS6KB1 under conditions of nutrient depletion. Mitogenic stimulation leads to binding and activation of a complex composed of MTOR and RPTOR, leading to phosphorylation and release of RPS6KB1 and binding of EIF4B to eIF-3. In terms of processing, phosphorylated by TGF-beta type II receptor.

Its subcellular location is the cytoplasm. Functionally, component of the eukaryotic translation initiation factor 3 (eIF-3) complex, which is required for several steps in the initiation of protein synthesis. The eIF-3 complex associates with the 40S ribosome and facilitates the recruitment of eIF-1, eIF-1A, eIF-2:GTP:methionyl-tRNAi and eIF-5 to form the 43S pre-initiation complex (43S PIC). The eIF-3 complex stimulates mRNA recruitment to the 43S PIC and scanning of the mRNA for AUG recognition. The eIF-3 complex is also required for disassembly and recycling of post-termination ribosomal complexes and subsequently prevents premature joining of the 40S and 60S ribosomal subunits prior to initiation. The eIF-3 complex specifically targets and initiates translation of a subset of mRNAs involved in cell proliferation, including cell cycling, differentiation and apoptosis, and uses different modes of RNA stem-loop binding to exert either translational activation or repression. This Homo sapiens (Human) protein is Eukaryotic translation initiation factor 3 subunit I.